The primary structure comprises 866 residues: N-alpha-acetyltransferase 15, NatA auxiliary subunit (866 aa).

TPR repeat units lie at residues 46–79 (GETLAMKGLTLNCLGKKEEAYELVRRGLRNDLKS), 80–113 (HVCWHVYGLLQRSDKKYDEAIKCYRNALKWDKDN), 148–184 (RASWIGYAIAYHLLEDYEMAAKILEEFRKTQQTSPDK), and 224–257 (LAVEETKGELLLQLCRLEDAADVYRGLQERNPEN). K262 is modified (N6-acetyllysine). Phosphoserine is present on S302. TPR repeat units follow at residues 374–407 (LWVQYYLAQHYDKIGQPSIALEYINTAIESTPTL), 409–441 (ELFLVKAKIYKHAGNIKEAARWMDEAQALDTAD), and 485–518 (MWFQTECAQAYKAMNKFGEALKKCHEIERHFIEI). Residues 500 to 866 (KFGEALKKCH…AEAEELANEI (367 aa)) form an interaction with HYPK region. A phosphoserine mark is found at S537 and S588. A compositionally biased stretch (basic and acidic residues) spans 579 to 594 (EHEADTANMSDKELKK). Residues 579–642 (EHEADTANMS…EEIGGPKEEL (64 aa)) are disordered. Residues 595 to 604 (LRNKQRRAQK) show a composition bias toward basic residues. Basic and acidic residues predominate over residues 606–621 (AQIEEEKKNAEKEKQQ). The Bipartite nuclear localization signal motif lies at 612–629 (KKNAEKEKQQRNQKKKKD). One copy of the TPR 8 repeat lies at 672-705 (IETHLFAFEIYFRKEKFLLMLQSVKRAFAIDSSH). N6-acetyllysine occurs at positions 735 and 756. A phosphoserine mark is found at S855 and S856.

In terms of assembly, component of the N-terminal acetyltransferase A complex (also called the NatA complex) composed of NAA10 and NAA15. Within the complex interacts with NAA10. Component of the N-terminal acetyltransferase A (NatA)/HYPK complex at least composed of NAA10, NAA15 and HYPK, which has N-terminal acetyltransferase activity. In complex with NAA10, interacts with HYPK. Component of the N-terminal acetyltransferase E (NatE) complex at least composed of NAA10, NAA15 and NAA50. Within the complex interacts with NAA10; the interaction is required for binding to NAA50. Interacts with NAAT50. The interaction of the NatA complex with NAA50 reduces the acetylation activity of the NatA complex. Component of the N-terminal acetyltransferase E (NatE)/HYPK complex at least composed of NAA10, NAA15, NAA50 and HYPK. In complex with NAA10 interacts with HYPK; the interaction with HYPK reduces the capacity of the NatA complex to interact with NAA50. Interacts with NAA11. Interacts with XRCC6 and XRCC5. Cleaved by caspases during apoptosis, resulting in a stable 35 kDa fragment. In terms of tissue distribution, expressed at high levels in testis and in ocular endothelial cells. Also found in brain (corpus callosum), heart, colon, bone marrow and at lower levels in most adult tissues, including thyroid, liver, pancreas, mammary and salivary glands, lung, ovary, urogenital system and upper gastrointestinal tract. Overexpressed in gastric cancer, in papillary thyroid carcinomas and in a Burkitt lymphoma cell line (Daudi). Specifically suppressed in abnormal proliferating blood vessels in eyes of patients with proliferative diabetic retinopathy.

Its subcellular location is the cytoplasm. The protein localises to the nucleus. Functionally, auxillary subunit of N-terminal acetyltransferase complexes which display alpha (N-terminal) acetyltransferase (NAT) activity. The NAT activity may be important for vascular, hematopoietic and neuronal growth and development. Required to control retinal neovascularization in adult ocular endothelial cells. In complex with XRCC6 and XRCC5 (Ku80), up-regulates transcription from the osteocalcin promoter. The sequence is that of N-alpha-acetyltransferase 15, NatA auxiliary subunit (NAA15) from Homo sapiens (Human).